Here is a 181-residue protein sequence, read N- to C-terminus: Adenine phosphoribosyltransferase (181 aa).

It belongs to the purine/pyrimidine phosphoribosyltransferase family. Homodimer.

Its subcellular location is the cytoplasm. It carries out the reaction AMP + diphosphate = 5-phospho-alpha-D-ribose 1-diphosphate + adenine. Its pathway is purine metabolism; AMP biosynthesis via salvage pathway; AMP from adenine: step 1/1. Functionally, catalyzes a salvage reaction resulting in the formation of AMP, that is energically less costly than de novo synthesis. The sequence is that of Adenine phosphoribosyltransferase from Methylobacterium radiotolerans (strain ATCC 27329 / DSM 1819 / JCM 2831 / NBRC 15690 / NCIMB 10815 / 0-1).